We begin with the raw amino-acid sequence, 307 residues long: MIVIAGATATGKTELCIKLAKLLDGEVISADSMMVYKYMDIGTAKPSVEEREGIEHYVIDVVLPSQNYSVKDYIEDFDKAVQKIREKGKIPIVVGGTWLYIQGALYGLSDAPESDWTLREKLYSLVNLELYTQLQKVDPEYANKIHVNDKRRIVRALEVYYLTGKPFSFFINQHNFKSKRYNFLGFILERDRQELMDRIEIRVEKMFEKGLVEEVKKLVDMGFKDSLTSMQAIGYKEILPYLDKKISLEDAKKCIIENTKDFAKRQIRTFRNKTDFEKIEASKFEVNEMLDYIYRKYNQEVRDVSTR.

6–13 (GATATGKT) contributes to the ATP binding site. 8-13 (TATGKT) provides a ligand contact to substrate. An interaction with substrate tRNA region spans residues 31–34 (DSMM).

The protein belongs to the IPP transferase family. As to quaternary structure, monomer. It depends on Mg(2+) as a cofactor.

The enzyme catalyses adenosine(37) in tRNA + dimethylallyl diphosphate = N(6)-dimethylallyladenosine(37) in tRNA + diphosphate. In terms of biological role, catalyzes the transfer of a dimethylallyl group onto the adenine at position 37 in tRNAs that read codons beginning with uridine, leading to the formation of N6-(dimethylallyl)adenosine (i(6)A). The polypeptide is tRNA dimethylallyltransferase (Sulfurihydrogenibium sp. (strain YO3AOP1)).